The following is a 188-amino-acid chain: Probable manganese efflux pump MntP (188 aa).

Helical transmembrane passes span 3-23, 66-86, 106-128, 143-163, and 168-188; these read ITAT…ASIG, LEWN…RMII, WLLV…GLAF, ATLI…SIIG, and ILGG…HFHG.

It belongs to the MntP (TC 9.B.29) family.

It localises to the cell inner membrane. In terms of biological role, probably functions as a manganese efflux pump. The sequence is that of Probable manganese efflux pump MntP from Escherichia coli O7:K1 (strain IAI39 / ExPEC).